Consider the following 187-residue polypeptide: NADH-quinone oxidoreductase subunit B (187 aa).

Over residues Met-1 to His-10 the composition is skewed to basic and acidic residues. The tract at residues Met-1–Gln-22 is disordered. Residues Cys-66, Cys-67, Cys-131, and Cys-161 each contribute to the [4Fe-4S] cluster site.

The protein belongs to the complex I 20 kDa subunit family. In terms of assembly, NDH-1 is composed of 14 different subunits. Subunits NuoB, C, D, E, F, and G constitute the peripheral sector of the complex. [4Fe-4S] cluster is required as a cofactor.

It localises to the cell inner membrane. It catalyses the reaction a quinone + NADH + 5 H(+)(in) = a quinol + NAD(+) + 4 H(+)(out). Its function is as follows. NDH-1 shuttles electrons from NADH, via FMN and iron-sulfur (Fe-S) centers, to quinones in the respiratory chain. Couples the redox reaction to proton translocation (for every two electrons transferred, four hydrogen ions are translocated across the cytoplasmic membrane), and thus conserves the redox energy in a proton gradient. This Erythrobacter litoralis (strain HTCC2594) protein is NADH-quinone oxidoreductase subunit B.